The sequence spans 236 residues: MAAGLGVKAAPFTYVAHALAVAAAVMVLVWCISFRGGLAFEADNKNLIFNVHPVLMLIGYIILGSEAIMIYKIFPKLNHDTTKLIHLILHAIAIVLGAVGIYCAFKFHNESGIANLYSLHSWLGIGTISLYGIQWIFGFVAFFYPGAAPHVRRGALPWHVLFGLFVYVLTLATAELGLLEKLTFLQSSGLDKYGAEAFLVNFTGLVVALFGAAVVVAAVAPAHVEEPEGYAPIPVN.

The Cytoplasmic segment spans residues 1 to 11 (MAAGLGVKAAP). The chain crosses the membrane as a helical span at residues 12-32 (FTYVAHALAVAAAVMVLVWCI). The Cytochrome b561 domain maps to 15-219 (VAHALAVAAA…FGAAVVVAAV (205 aa)). The Extracellular portion of the chain corresponds to 33 to 53 (SFRGGLAFEADNKNLIFNVHP). His-52 contacts heme b. Residues 54-74 (VLMLIGYIILGSEAIMIYKIF) traverse the membrane as a helical segment. Residue 67-75 (AIMIYKIFP) coordinates L-ascorbate. At 75-84 (PKLNHDTTKL) the chain is on the cytoplasmic side. A helical transmembrane segment spans residues 85–105 (IHLILHAIAIVLGAVGIYCAF). Positions 86 and 120 each coordinate heme b. The Extracellular segment spans residues 106–122 (KFHNESGIANLYSLHSW). 116-125 (LYSLHSWLGI) lines the monodehydro-L-ascorbate radical pocket. The helical transmembrane segment at 123 to 143 (LGIGTISLYGIQWIFGFVAFF) threads the bilayer. Residues 144 to 153 (YPGAAPHVRR) lie on the Cytoplasmic side of the membrane. The chain crosses the membrane as a helical span at residues 154-174 (GALPWHVLFGLFVYVLTLATA). Position 159 (His-159) interacts with heme b. The Extracellular portion of the chain corresponds to 175-196 (ELGLLEKLTFLQSSGLDKYGAE). Residues 197–217 (AFLVNFTGLVVALFGAAVVVA) form a helical membrane-spanning segment. At 218 to 236 (AVAPAHVEEPEGYAPIPVN) the chain is on the cytoplasmic side.

Heme b serves as cofactor.

It is found in the membrane. In terms of biological role, two-heme-containing cytochrome. Catalyzes ascorbate-dependent trans-membrane electron transfer by utilizing a concerted H(+)/e(-) transfer mechanism. This chain is Probable ascorbate-specific transmembrane electron transporter 2, found in Oryza sativa subsp. japonica (Rice).